We begin with the raw amino-acid sequence, 528 residues long: Xylose import ATP-binding protein XylG (528 aa).

ABC transporter domains are found at residues 6 to 245 (LQMN…VGRE) and 262 to 507 (FEAR…LSHP). ATP is bound at residue 38–45 (GENGAGKS). The tract at residues 504 to 528 (LSHPGDPDSNDPANNNHNDNDRKTT) is disordered.

Belongs to the ABC transporter superfamily. Xylose importer (TC 3.A.1.2.4) family. In terms of assembly, the complex is composed of two ATP-binding proteins (XylG), two transmembrane proteins (XylH) and a solute-binding protein (XylF).

It localises to the cell inner membrane. The enzyme catalyses D-xylose(out) + ATP + H2O = D-xylose(in) + ADP + phosphate + H(+). Its function is as follows. Part of the ABC transporter complex XylFGH involved in xylose import. Responsible for energy coupling to the transport system. In Pseudomonas syringae pv. tomato (strain ATCC BAA-871 / DC3000), this protein is Xylose import ATP-binding protein XylG.